A 63-amino-acid chain; its full sequence is MAVPKAKTSKWRRNQRRAQNFFNKFRRSLPSLSVCSNCGERIIPHRVCPYCGHYKGKEVIETE.

This sequence belongs to the bacterial ribosomal protein bL32 family.

The polypeptide is Large ribosomal subunit protein bL32 (rpmF) (Aquifex aeolicus (strain VF5)).